Reading from the N-terminus, the 584-residue chain is ATP-dependent ubiquitin transferase-like protein Cap2 (584 aa).

The E2-like domain stretch occupies residues 1 to 137; the sequence is MKQELHHTLL…SGTSNDVELE (137 aa). C90 functions as the For E2-like domain in the catalytic mechanism. The tract at residues 138 to 338 is linker domain; the sequence is GEFSAYWQSE…LLSRNQSRPD (201 aa). An adenylation plus E1-like domain region spans residues 339-584; sequence VGNLSQKRIA…RFSGCNICDE (246 aa). The For E1-like domain role is filled by C522.

In the C-terminal section; belongs to the HesA/MoeB/ThiF family. Interacts with CD-NTase DncV in the presence and absence of phage T2. A Cap2 dimer is bound on either side by a DncV monomer.

Functionally, CD-NTase priming component of a CBASS antiviral system. CBASS (cyclic oligonucleotide-based antiphage signaling system) provides immunity against bacteriophages. The CD-NTase protein (DncV) synthesizes cyclic nucleotides in response to infection; these serve as specific second messenger signals. The signals activate a diverse range of effectors, leading to bacterial cell death and thus abortive phage infection. A type II-A(GA) CBASS system. In terms of biological role, primes DncV; acts as a protein transferase, conjugating DncV, the CD-NTase, to unidentified target(s) in the cell via an E1-E2 ubiquitin transferase-like mechanism. During the conjugation reaction DncV is probably transiently attached to AMP. Protein conjugation requires ATP. Protects E.coli against phage infection. When the CBASS operon (capV-dncV-cap2-cap3) is introduced in E.coli MG1655 there is about 100-fold protection against phages P1 and T2. When the operon is introduced in E.coli MG1655 there is a more than 10(3) decrease in the efficiency of T2 plaque formation. Protects 100-fold against phage T5, offers no protection against T7. When the operon is introduced in E.coli MG1655 it protects against phages T2, T4, T5 and T6. Another paper shows the operon confers protection against phages P1, T2, T5 and T6 but not T4 or lambda. This is ATP-dependent ubiquitin transferase-like protein Cap2 from Vibrio cholerae serotype O1 (strain ATCC 39315 / El Tor Inaba N16961).